A 319-amino-acid polypeptide reads, in one-letter code: tRNA-modifying protein YgfZ (319 aa).

Folate is bound by residues Trp-27 and Trp-189.

It belongs to the tRNA-modifying YgfZ family.

The protein resides in the cytoplasm. Folate-binding protein involved in regulating the level of ATP-DnaA and in the modification of some tRNAs. It is probably a key factor in regulatory networks that act via tRNA modification, such as initiation of chromosomal replication. This Buchnera aphidicola subsp. Schizaphis graminum (strain Sg) protein is tRNA-modifying protein YgfZ.